We begin with the raw amino-acid sequence, 5478 residues long: Mucin-12 (5478 aa).

The first 16 residues, 1–16, serve as a signal peptide directing secretion; sequence MLVIWILTLALRLCAS. Topologically, residues 17 to 5380 are extracellular; that stretch reads VTTVTPEGSA…EFNIAKSLVY (5364 aa). Asn-154, Asn-170, and Asn-176 each carry an N-linked (GlcNAc...) asparagine glycan. Residues 212–737 form a disordered region; sequence LDSSTNSGHS…GSTETTLLPD (526 aa). The stretch at 222-240 is repeat 1; that stretch reads EESTVSHSGPGATGTTLFP. The interval 222–4761 is 28 X 19 AA approximate tandem repeats of E-E-S-X-X-X-H-X-X-P-X-X-T-X-T-X-X-X-P; that stretch reads EESTVSHSGP…PGSTQTMHFP (4540 aa). 4 stretches are compositionally biased toward polar residues: residues 226–246, 255–288, 296–313, and 325–342; these read VSHSGPGATGTTLFPSHSATS, SPITSASMETTALPGSTTTAGLSEKSTTFYSSPR, PARTTSSGVSEKSTTSHS, and DSTTMPGVSQESTASHSI. Residues 343–366 show a composition bias toward low complexity; it reads PGSTDTTLSPGTTTPSSLGPESTT. Over residues 367–387 the composition is skewed to polar residues; the sequence is FHSSPGYTKTTRLPDNTTTSG. Asn-382 carries an N-linked (GlcNAc...) asparagine glycan. The segment covering 396 to 413 has biased composition (low complexity); the sequence is HSSTGSPHTTLSPSSSTT. Over residues 419 to 440 the composition is skewed to polar residues; that stretch reads TTFQSWPSSKDTSPAPSGTTSA. 2 stretches are compositionally biased toward low complexity: residues 445-466 and 478-495; these read STTYHSSPSSTPTTHFSASSTT and SSPVATATTPPPARSATS. A run of 2 repeats spans residues 471-489 and 499-517. Residues 531-554 show a composition bias toward low complexity; it reads TFHGSTTHTKSSTPSTTAALAHTS. Composition is skewed to polar residues over residues 555–575 and 608–648; these read YHSSLGSTETTHFRDSSTISG and STPS…SPDT. Residues 654–669 show a composition bias toward low complexity; the sequence is SMTSSGVSEESTTSHS. Copy 4 of the repeat occupies 662–680; sequence EESTTSHSRPGSTHTTAFP. Composition is skewed to polar residues over residues 670-715 and 722-737; these read RPGS…TASS and TFHSRPGSTETTLLPD. An N-linked (GlcNAc...) asparagine glycan is attached at Asn-738. 4 disordered regions span residues 749–4847, 4887–5034, 5048–5071, and 5093–5112; these read MPVH…HFTT, SSRS…THTV, STAFHSSSDATGTTPLPARSTASD, and ASSSTSGLTEESTTFHTSPS. Composition is skewed to polar residues over residues 751–783 and 792–842; these read VHSSTRSPHTTLSPAGSTTRQGESTTFHSWPSS and TTTS…TQTM. Repeat unit 5 spans residues 827 to 845; sequence EESTTYHSSPGSTQTMHFP. The span at 859–877 shows a compositional bias: low complexity; that stretch reads TSHSSTTHTISSAPSTTSA. 2 stretches are compositionally biased toward polar residues: residues 884 to 899 and 928 to 970; these read SYHSSPGSTATTHFPD and RSTT…TTFH. Low complexity predominate over residues 971-1007; the sequence is SSPRSPATTLSPASTTSSGVSEESTTSRSRPGSTHTT. Positions 1009–1021 are enriched in polar residues; the sequence is FPDSTTTPGLSRH. Low complexity predominate over residues 1022–1065; sequence STTSHSSPGSTDTTLLPASTTTSGPSQESTTSHSSSGSTDTALS. Composition is skewed to polar residues over residues 1066 to 1101 and 1108 to 1138; these read PGSTTALSFGQESTTFHSNPGSTHTTLFPDSTTSSG and RVHSSTGSPRTTLSPASSTSPGLQGESTAFQ. The segment covering 1139–1157 has biased composition (low complexity); the sequence is THPASTHTTPSPPSTATAP. The stretch at 1159-1177 is repeat 6; the sequence is EESTTYHRSPGSTPTTHFP. Polar residues-rich tracts occupy residues 1160-1184 and 1191-1207; these read ESTTYHRSPGSTPTTHFPASSTTSG and IFHSSPDASGTTPSSAH. 3 stretches are compositionally biased toward low complexity: residues 1208 to 1220, 1229 to 1241, and 1249 to 1262; these read STTSGRGESTTSR, TTLPGSTTTPGLS, and SSPRSPTTTLSPAS. Polar residues-rich tracts occupy residues 1271–1324, 1331–1357, and 1364–1377; these read ESTT…TTSV, TFHSRPASTHTTLFTEDSTTSGLTEES, and PASTQTGLPATLTT. 2 stretches are compositionally biased toward low complexity: residues 1384 to 1396 and 1411 to 1438; these read STTFPSSSGSTGT and ESTPSRLSPSSTETTTLPGSPTTPSLSE. Polar residues predominate over residues 1439–1448; the sequence is KSTTFYTSPR. The span at 1458–1481 shows a compositional bias: low complexity; it reads TTTSSGVSEESSTSHSQPGSTHTT. Copy 7 of the repeat occupies 1466–1484; it reads EESSTSHSQPGSTHTTAFP. Polar residues predominate over residues 1483-1537; that stretch reads FPDSTTTSDLSQEPTTSHSSQGSTEATLSPGSTTASSLGQQSTTFHSSPGDTETT. A compositionally biased stretch (low complexity) spans 1552-1568; the sequence is STPTHSSTGSLHTTLTP. Polar residues-rich tracts occupy residues 1569–1586 and 1606–1630; these read ASSTSAGLQEESTTFQSW and VSTTYHSRPSSTPTTHFSASSTTLG. Residues 1633–1651 form repeat 8; the sequence is EESTTVHSSPGATGTALFP. Positions 1653-1708 are enriched in polar residues; the sequence is RSATSVLVGEPTTSPISSGSTETTALPGSTTTAGLSEKSTTFYSSPRSPDTTLSPA. The segment covering 1709 to 1724 has biased composition (low complexity); the sequence is STTSSGVSEESTTSHS. The stretch at 1717–1735 is repeat 9; sequence EESTTSHSRPGSTHTTAFP. Polar residues-rich tracts occupy residues 1725-1797 and 1805-1840; these read RPGS…TTAS and PVHSSTGSPHTTLSPAGSTTRQGESTTFQSWPSSKD. N-linked (GlcNAc...) asparagine glycosylation is present at Asn-1793. 2 stretches are compositionally biased toward low complexity: residues 1856–1877 and 1889–1906; these read STTSHGSPSSTPTTHFSASSTT and SSPVATATTPSPARSTTS. A run of 2 repeats spans residues 1882 to 1900 and 1910 to 1928. Residues 1914–1935 show a composition bias toward polar residues; sequence AYHSSPGSTQTMHFPESSTASG. Residues 1943–1959 are compositionally biased toward low complexity; it reads SHSSTTHTISSPPSTTS. Composition is skewed to polar residues over residues 1967–1982 and 2011–2053; these read SYHSSPGSTATTHFPD and RSTT…TTFH. The span at 2054–2082 shows a compositional bias: low complexity; it reads SSPRSPATTLSPASTTSSGVSEESTTSHS. Repeat unit 12 spans residues 2075–2093; that stretch reads EESTTSHSRPGSTHTTAFP. The span at 2083-2104 shows a compositional bias: polar residues; sequence RPGSTHTTAFPDSTTTPGLSRH. Residues 2105 to 2130 are compositionally biased toward low complexity; it reads STTSHSSPGSTDTTLLPASTTTSGPS. Polar residues-rich tracts occupy residues 2131 to 2184 and 2191 to 2221; these read QEST…TSSG and RVHSSTGSPRTTLSPASSTSPGLQGESTAFQ. The span at 2222–2240 shows a compositional bias: low complexity; that stretch reads THPASTHTTPSPPSTATAP. The stretch at 2242–2260 is repeat 13; it reads EESTTYHRSPGSTPTTHFP. Polar residues-rich tracts occupy residues 2243–2267 and 2274–2290; these read ESTTYHRSPGSTPTTHFPASSTTSG and IFHSSPDASGTTPSSAH. Composition is skewed to low complexity over residues 2291–2303, 2312–2324, and 2332–2345; these read STTSGRGESTTSR, TTLPGSTTTPGLS, and SSPRSPTTTLSPAS. Residues 2354–2392 show a composition bias toward polar residues; the sequence is ESTTSRSQPGSTHSTVSPASTTTPGLSEESTTVYSSSPG. A compositionally biased stretch (low complexity) spans 2393-2407; that stretch reads STETTVFPRTPTTSV. Composition is skewed to polar residues over residues 2414 to 2440 and 2447 to 2460; these read TFHSRPASTHTTLFTEDSTTSGLTEES and PASTQTGLPATLTT. 2 stretches are compositionally biased toward low complexity: residues 2467 to 2483 and 2494 to 2521; these read STTFPSSSGSTGTTLSP and ESTPSRLSPSSTETTTLPGSPTTPSLSE. A compositionally biased stretch (polar residues) spans 2522–2531; sequence KSTTFYTSPR. Positions 2541 to 2564 are enriched in low complexity; sequence TTTSSGVSEESSTSHSQPGSTHTT. Copy 14 of the repeat occupies 2549 to 2567; the sequence is EESSTSHSQPGSTHTTAFP. A compositionally biased stretch (polar residues) spans 2566 to 2578; sequence FPDSTTTPGLSRH. Residues 2579 to 2604 are compositionally biased toward low complexity; sequence STTSHSSPGSTDTTLLPASTTTSGPS. 2 stretches are compositionally biased toward polar residues: residues 2605-2658 and 2665-2695; these read QEST…TSSG and RVHSSTGSPRTTLSPASSTSPGLQGESTTFQ. The segment covering 2696–2714 has biased composition (low complexity); the sequence is THPASTHTTPSPPSTATAP. Repeat 15 spans residues 2716–2734; that stretch reads EESTTYHRSPGSTPTTHFP. 2 stretches are compositionally biased toward polar residues: residues 2717–2741 and 2748–2764; these read ESTTYHRSPGSTPTTHFPASSTTSG and IFHSSPDASGTTPSSAH. 3 stretches are compositionally biased toward low complexity: residues 2765–2777, 2786–2798, and 2806–2819; these read STTSGRGESTTSR, TTLPGSTTTPGLS, and SSPRSPTTTLSPAS. Composition is skewed to polar residues over residues 2828–2881, 2888–2914, and 2921–2934; these read ESTT…TTSV, TFHSRPASTHTTLFTEDSTTSGLTEES, and PASTQTGLPATLTT. 2 stretches are compositionally biased toward low complexity: residues 2941 to 2957 and 2968 to 2995; these read STTFPSSSGSTGTTLSP and ESTPSRLSPSSTETTTLPGSPTTPSLSE. Residues 2996-3005 are compositionally biased toward polar residues; sequence KSTTFYTSPR. Positions 3015 to 3038 are enriched in low complexity; that stretch reads TTTSSGVSEESSTSHSQPGSTHTT. Repeat 16 spans residues 3023-3041; it reads EESSTSHSQPGSTHTTAFP. The span at 3040–3094 shows a compositional bias: polar residues; the sequence is FPDSTTTSGLSQEPTASHSSQGSTEATLSPGSTTASSLGQQSTTFHSSPGDTETT. A compositionally biased stretch (low complexity) spans 3109–3125; it reads STPTHSSTGSLHTTLTP. Composition is skewed to polar residues over residues 3126-3143 and 3163-3187; these read ASSTSAGLQEESTTFQSW and VSTTYHSRPSSTPTTHFSASSTTLG. The stretch at 3190–3208 is repeat 17; it reads EESTTVHSSPGATGTALFP. Polar residues predominate over residues 3210–3265; the sequence is RSATSVLVGEPTTSPISSGSTETTALPGSTTTAGLSEKSTTFYSSPRSPDTTLSPA. Residues 3266–3281 show a composition bias toward low complexity; the sequence is STTSSGVSEESTTSHS. Repeat unit 18 spans residues 3274-3292; the sequence is EESTTSHSRPGSTHTTAFP. 2 stretches are compositionally biased toward polar residues: residues 3282-3354 and 3362-3397; these read RPGS…TTAS and PVHSSTGSPHTTLSPAGSTTRQGESTTFQSWPNSKD. Asn-3350 is a glycosylation site (N-linked (GlcNAc...) asparagine). Composition is skewed to low complexity over residues 3413–3434 and 3446–3463; these read STTSHGSPSSTPTTHFSASSTT and SSPVATATTPSPARSTTS. 2 repeat units span residues 3439–3457 and 3467–3485. The segment covering 3468–3482 has biased composition (polar residues); that stretch reads ESTTYHSSPGSTQTM. Residues 3499 to 3517 are compositionally biased toward low complexity; it reads TSHSSTTHTISSAPSTTSA. 2 stretches are compositionally biased toward polar residues: residues 3524 to 3539 and 3568 to 3610; these read SYHSSPGSTATTHFPD and RSTT…TTFH. The segment covering 3611-3639 has biased composition (low complexity); the sequence is SSPRSPATTLSPASTTSSGVSEESTTSHS. Residues 3632–3650 form repeat 21; sequence EESTTSHSRPGSTHTTAFP. Over residues 3640–3661 the composition is skewed to polar residues; that stretch reads RPGSTHTTAFPDSTTTPGLSRH. Residues 3662–3705 show a composition bias toward low complexity; the sequence is STTSHSSPGSTDTTLLPASTTTSGSSQESTTSHSSSGSTDTALS. Composition is skewed to polar residues over residues 3706–3741 and 3748–3778; these read PGSTTALSFGQESTTFHSSPGSTHTTLFPDSTTSSG and RVHSSTGSPRTTLSPASSTSPGLQGESTAFQ. A compositionally biased stretch (low complexity) spans 3779–3797; it reads THPASTHTTPSPPSTATAP. Repeat unit 22 spans residues 3799 to 3817; that stretch reads EESTTYHRSPGSTPTTHFP. 2 stretches are compositionally biased toward polar residues: residues 3800–3824 and 3831–3847; these read ESTTYHRSPGSTPTTHFPASSTTSG and IFHSSPDASGTTPSSAH. Composition is skewed to low complexity over residues 3848 to 3860, 3869 to 3881, and 3889 to 3902; these read STTSGRGESTTSR, TTLPGSTTTPGLS, and SSPRSPTTTLSPAS. 3 stretches are compositionally biased toward polar residues: residues 3911 to 3963, 3971 to 3997, and 4004 to 4017; these read ESTT…TTTS, TFHSRPASTHTTLFTEDSTTSGLTEES, and PASTQTGLPATLTT. 2 stretches are compositionally biased toward low complexity: residues 4024 to 4036 and 4051 to 4078; these read STTFPSSSGSTGT and ESTPSRLSPSSTETTTLPGSPTTPSLSE. Positions 4079-4088 are enriched in polar residues; that stretch reads KSTTFYTSPR. Residues 4098 to 4121 are compositionally biased toward low complexity; sequence TTTSSGVSEESSTSHSQPGSTHTT. Repeat 23 spans residues 4106–4124; that stretch reads EESSTSHSQPGSTHTTAFP. The segment covering 4123–4177 has biased composition (polar residues); that stretch reads FPDSTTTSGLSQEPTTSHSSQGSTEATLSPGSTTASSLGQQSTTFHSSPGDTETT. Positions 4192–4208 are enriched in low complexity; the sequence is STPTHSSTGSLHTTLTP. A compositionally biased stretch (polar residues) spans 4209-4226; it reads ASSTSTGLQEESTTFQSW. Over residues 4227-4249 the composition is skewed to low complexity; that stretch reads PSSSDTTPSPPSTTAVPVEVSTT. The span at 4250-4270 shows a compositional bias: polar residues; sequence YHSRPSSTPTTHFSASSTTLG. Residues 4273–4291 form repeat 24; it reads EESTTVHSSPGATGTALFP. The segment covering 4293-4348 has biased composition (polar residues); that stretch reads RSATSVLVGEPTTSPISSGSTETTALPGSTTTAGLSEKSTTFYSSPRSPDTTLSPA. Low complexity predominate over residues 4349–4364; the sequence is STTSSGVSEESTTSHS. Composition is skewed to polar residues over residues 4369–4437 and 4445–4480; these read MHTT…TTAS and PVHSSTGSPHTTLSPAGSTTRQGESTTFQSWPNSKD. N-linked (GlcNAc...) asparagine glycosylation occurs at Asn-4433. Composition is skewed to low complexity over residues 4496–4517 and 4529–4546; these read STTSHGSPSSTPTTHFSASSTT and SSPVATATTPSPARSTTS. 2 consecutive repeat copies span residues 4522 to 4540 and 4550 to 4568. Positions 4551–4571 are enriched in polar residues; it reads ESTTYHSSPGSTQTMHFPESN. A glycan (N-linked (GlcNAc...) asparagine) is linked at Asn-4571. Positions 4582–4600 are enriched in low complexity; that stretch reads TSHSSTTHTISSAPSTTSA. Polar residues-rich tracts occupy residues 4607-4622 and 4651-4688; these read SYHSSPGSTATTHFPD and RSTTSVLLGESTTSPISSGSMETTALPGSTTTPGLSEK. 2 stretches are compositionally biased toward low complexity: residues 4689-4710 and 4722-4739; these read STTFHSSPSSTPTTHFSASSTT and SSPVATATTPSPARSTTS. 2 repeat units span residues 4715-4733 and 4743-4761. Polar residues predominate over residues 4747–4768; it reads AYHSSPGSTQTMHFPESSTASG. Over residues 4776–4792 the composition is skewed to low complexity; sequence SHSSTTHTISSPPSTTS. Composition is skewed to polar residues over residues 4800 to 4814 and 4887 to 4917; these read SYHSSPGSIATTHFP and SSRSPDQTLSPASMTSSSISGEPTSLYSQAE. The span at 4918-4931 shows a compositional bias: low complexity; that stretch reads STHTTAFPASTTTS. Composition is skewed to polar residues over residues 4932–5024 and 5048–5061; these read GLSQ…STPF and STAFHSSSDATGTT. Low complexity predominate over residues 5094–5112; the sequence is SSSTSGLTEESTTFHTSPS. One can recognise an EGF-like domain in the interval 5116 to 5154; that stretch reads TIVSTESLETLAPGLCQEGQIWNGKQCVCPQGYVGYQCL. Cys-5144 and Cys-5153 are joined by a disulfide. The SEA domain maps to 5168-5275; sequence LNATLGMTVK…TRTTLLDPDS (108 aa). Residues Asn-5169, Asn-5182, Asn-5197, Asn-5228, and Asn-5264 are each glycosylated (N-linked (GlcNAc...) asparagine). Positions 5226–5233 match the Cleavage motif motif; that stretch reads LLNGSIVV. The chain crosses the membrane as a helical span at residues 5381 to 5401; the sequence is GIVGAVMAVLLLALIILIILF. Topologically, residues 5402–5478 are cytoplasmic; the sequence is SLSQRKRHRE…QRPEMVASTV (77 aa).

Ubiquitous, with higher expression in colon. Down-regulated in colorectal cancer as well as in the colon of patients with ulcerative colitis (UC) and Crohn's disease (CD).

It is found in the membrane. Its function is as follows. Involved in epithelial cell protection, adhesion modulation, and signaling. May be involved in epithelial cell growth regulation. Stimulated by both cytokine TNF-alpha and TGF-beta in intestinal epithelium. The polypeptide is Mucin-12 (MUC12) (Homo sapiens (Human)).